Reading from the N-terminus, the 447-residue chain is Cellulosome-anchoring protein (447 aa).

A signal peptide spans 1–29 (MKRIKRILAVLTIFALLATINAFTFVSLA). Residues 30 to 180 (QTNTIEIIIG…EIIEASAPEA (151 aa)) enclose the Cohesin domain. The receptor binding site for duplicated segment of CipA stretch occupies residues 30–180 (QTNTIEIIIG…EIIEASAPEA (151 aa)). Positions 177–247 (APEATPTPGS…EHAPFLKGYP (71 aa)) are disordered. A compositionally biased stretch (gly residues) spans 188 to 200 (AGSGAGGGTGSSG). The span at 201–223 (SGQPSATPTPTATEKPSTTPKTT) shows a compositional bias: low complexity. 3 SLH domains span residues 216-280 (PSTT…AGKN), 281-344 (SSIT…EQGT), and 345-408 (DVKT…GAVL). An SLH 4; truncated domain is found at 409 to 429 (EFTDVPVNYWAYKDIAEGVIY).

Its subcellular location is the secreted. The protein resides in the cell wall. It is found in the S-layer. Anchors the cellulosome to the cell surface by binding the duplicated segment that is present at the C-terminal end of CipA. This Acetivibrio thermocellus (strain ATCC 27405 / DSM 1237 / JCM 9322 / NBRC 103400 / NCIMB 10682 / NRRL B-4536 / VPI 7372) (Clostridium thermocellum) protein is Cellulosome-anchoring protein (ancA).